A 294-amino-acid polypeptide reads, in one-letter code: HTH-type transcriptional regulator DgdR (294 aa).

The region spanning 14 to 70 (LEIDLLRSFVVIAEVRALSRAAARVGRTQSALSQQMKRLEDIVDQPLFQRTGRGVVL) is the HTH lysR-type domain. Residues 31–50 (LSRAAARVGRTQSALSQQMK) constitute a DNA-binding region (H-T-H motif).

This sequence belongs to the LysR transcriptional regulatory family.

The protein is HTH-type transcriptional regulator DgdR (dgdR) of Burkholderia cepacia (Pseudomonas cepacia).